Consider the following 297-residue polypeptide: Large ribosomal subunit protein uL18 (297 aa).

Belongs to the universal ribosomal protein uL18 family. Component of the large ribosomal subunit (LSU).

It localises to the cytoplasm. Its subcellular location is the nucleus. In terms of biological role, component of the ribosome, a large ribonucleoprotein complex responsible for the synthesis of proteins in the cell. The small ribosomal subunit (SSU) binds messenger RNAs (mRNAs) and translates the encoded message by selecting cognate aminoacyl-transfer RNA (tRNA) molecules. The large subunit (LSU) contains the ribosomal catalytic site termed the peptidyl transferase center (PTC), which catalyzes the formation of peptide bonds, thereby polymerizing the amino acids delivered by tRNAs into a polypeptide chain. The nascent polypeptides leave the ribosome through a tunnel in the LSU and interact with protein factors that function in enzymatic processing, targeting, and the membrane insertion of nascent chains at the exit of the ribosomal tunnel. In Lysiphlebus testaceipes (Greenbugs aphid parastoid), this protein is Large ribosomal subunit protein uL18 (RpL5).